The primary structure comprises 672 residues: Acetoacetyl-CoA synthetase (672 aa).

Belongs to the ATP-dependent AMP-binding enzyme family.

It localises to the cytoplasm. It is found in the cytosol. The catalysed reaction is acetoacetate + ATP + CoA = acetoacetyl-CoA + AMP + diphosphate. Its function is as follows. Converts acetoacetate to acetoacetyl-CoA in the cytosol. Ketone body-utilizing enzyme, responsible for the synthesis of cholesterol and fatty acids. The sequence is that of Acetoacetyl-CoA synthetase (AACS) from Macaca fascicularis (Crab-eating macaque).